We begin with the raw amino-acid sequence, 261 residues long: MQDTPLIIGSRSFQSRLLVGTGKYKDLNETDLAIQASGAEIVTVAIRRVNIGQNPDQPNLLSVIPPEKYTILPNTAGCFDADSAVRTCMLARALLDGHNLVKLEVLGDEKTLYPNVTETLKAARTLIDDGFEIMVYTSDDPIIAQELESMGCVAIMPLGSLIGSGLGILNPHTISIIKENAKVPVLVDAGVGTASDAAIAMELGCDGVLMNTAIAAAQNPILMASAMKKAVEAGREAFLAGRMPRKRMANASSPETGYFFK.

Lys-102 functions as the Schiff-base intermediate with DXP in the catalytic mechanism. 1-deoxy-D-xylulose 5-phosphate contacts are provided by residues Gly-163, 189–190 (AG), and 211–212 (NT).

It belongs to the ThiG family. Homotetramer. Forms heterodimers with either ThiH or ThiS.

The protein resides in the cytoplasm. The enzyme catalyses [ThiS sulfur-carrier protein]-C-terminal-Gly-aminoethanethioate + 2-iminoacetate + 1-deoxy-D-xylulose 5-phosphate = [ThiS sulfur-carrier protein]-C-terminal Gly-Gly + 2-[(2R,5Z)-2-carboxy-4-methylthiazol-5(2H)-ylidene]ethyl phosphate + 2 H2O + H(+). Its pathway is cofactor biosynthesis; thiamine diphosphate biosynthesis. Functionally, catalyzes the rearrangement of 1-deoxy-D-xylulose 5-phosphate (DXP) to produce the thiazole phosphate moiety of thiamine. Sulfur is provided by the thiocarboxylate moiety of the carrier protein ThiS. In vitro, sulfur can be provided by H(2)S. The polypeptide is Thiazole synthase (Acinetobacter baumannii (strain SDF)).